A 432-amino-acid chain; its full sequence is Glutamate-1-semialdehyde 2,1-aminomutase (432 aa).

Residue lysine 270 is modified to N6-(pyridoxal phosphate)lysine.

Belongs to the class-III pyridoxal-phosphate-dependent aminotransferase family. HemL subfamily. As to quaternary structure, homodimer. The cofactor is pyridoxal 5'-phosphate.

It is found in the cytoplasm. It catalyses the reaction (S)-4-amino-5-oxopentanoate = 5-aminolevulinate. It participates in porphyrin-containing compound metabolism; protoporphyrin-IX biosynthesis; 5-aminolevulinate from L-glutamyl-tRNA(Glu): step 2/2. This chain is Glutamate-1-semialdehyde 2,1-aminomutase, found in Acinetobacter baumannii (strain ATCC 17978 / DSM 105126 / CIP 53.77 / LMG 1025 / NCDC KC755 / 5377).